The primary structure comprises 84 residues: Acid stress protein IbaG (84 aa).

Belongs to the BolA/IbaG family.

In terms of biological role, involved in cell resistance against acid stress. This chain is Acid stress protein IbaG, found in Escherichia coli O6:H1 (strain CFT073 / ATCC 700928 / UPEC).